A 292-amino-acid polypeptide reads, in one-letter code: Protein rogdi homolog (292 aa).

Polar residues predominate over residues Met1–Tyr12. The tract at residues Met1–Arg25 is disordered.

It belongs to the rogdi family.

Its subcellular location is the nucleus envelope. This Caenorhabditis elegans protein is Protein rogdi homolog.